The primary structure comprises 407 residues: 1-deoxy-D-xylulose 5-phosphate reductoisomerase (407 aa).

NADPH-binding residues include Thr-27, Gly-28, Ser-29, Ile-30, Ala-53, Arg-54, Asn-55, and Asn-140. Residue Lys-141 participates in 1-deoxy-D-xylulose 5-phosphate binding. An NADPH-binding site is contributed by Glu-142. Residue Asp-166 coordinates Mn(2+). Positions 167, 168, 192, and 215 each coordinate 1-deoxy-D-xylulose 5-phosphate. Glu-168 provides a ligand contact to Mn(2+). Gly-221 is a binding site for NADPH. Positions 228, 233, 234, and 237 each coordinate 1-deoxy-D-xylulose 5-phosphate. Glu-237 is a binding site for Mn(2+).

It belongs to the DXR family. Requires Mg(2+) as cofactor. Mn(2+) serves as cofactor.

The catalysed reaction is 2-C-methyl-D-erythritol 4-phosphate + NADP(+) = 1-deoxy-D-xylulose 5-phosphate + NADPH + H(+). The protein operates within isoprenoid biosynthesis; isopentenyl diphosphate biosynthesis via DXP pathway; isopentenyl diphosphate from 1-deoxy-D-xylulose 5-phosphate: step 1/6. Its function is as follows. Catalyzes the NADPH-dependent rearrangement and reduction of 1-deoxy-D-xylulose-5-phosphate (DXP) to 2-C-methyl-D-erythritol 4-phosphate (MEP). In Oleidesulfovibrio alaskensis (strain ATCC BAA-1058 / DSM 17464 / G20) (Desulfovibrio alaskensis), this protein is 1-deoxy-D-xylulose 5-phosphate reductoisomerase.